The chain runs to 444 residues: Glutamate--tRNA ligase 2 (444 aa).

Positions 8 to 18 (PSPTGHLHAGN) match the 'HIGH' region motif. A 'KMSKS' region motif is present at residues 241–245 (KLSKR). Lysine 244 contributes to the ATP binding site.

Belongs to the class-I aminoacyl-tRNA synthetase family. Glutamate--tRNA ligase type 1 subfamily. In terms of assembly, monomer.

It is found in the cytoplasm. The enzyme catalyses tRNA(Glu) + L-glutamate + ATP = L-glutamyl-tRNA(Glu) + AMP + diphosphate. Functionally, catalyzes the attachment of glutamate to tRNA(Glu) in a two-step reaction: glutamate is first activated by ATP to form Glu-AMP and then transferred to the acceptor end of tRNA(Glu). The protein is Glutamate--tRNA ligase 2 of Acidiphilium cryptum (strain JF-5).